Reading from the N-terminus, the 577-residue chain is Arginine--tRNA ligase (577 aa).

Positions 122 to 132 (PNVAKEMHVGH) match the 'HIGH' region motif.

Belongs to the class-I aminoacyl-tRNA synthetase family. In terms of assembly, monomer.

The protein localises to the cytoplasm. It carries out the reaction tRNA(Arg) + L-arginine + ATP = L-arginyl-tRNA(Arg) + AMP + diphosphate. This is Arginine--tRNA ligase from Shigella flexneri.